Reading from the N-terminus, the 304-residue chain is MIPNRWRDLARRDIFEPLGLNGSYFIPNAHNRAHVAVASKYSDEVDIDFLDVMACSGGQMSSLSDYIKLMQTFLDPTLPQSLLPAHIMREWMTPVFGFNDDETEVGLLWEIVKIQDSYCRPVRVYEKNGVLGASRSVFAIHREMAFGVALLNTGTATVTGNIALEIFRIMQPYLDKLQERKVKERFAGHWRLPLQTNATSGSMVDISVSDGSLWITRLVLNGTDVLSLTEAMPAFGGARSRRVALWSMRRDEFRMVLGAGAATSCMSSWTAMDSGFSRGYPMDLVYFKGGRLHIPSAGVVLVRA.

It belongs to the beta-lactamase family.

Its pathway is mycotoxin biosynthesis. Its function is as follows. Beta-lactamase-like protein; part of the gene cluster that mediates the biosynthesis of strobilurin A, an antifungal polyketide that contains a key beta-methoxyacrylate toxophore that targets the complex III of the mitochondrial electron transport chain. Strobilurin biosynthesis begins with construction of benzoyl CoA by step-wise elimination of ammonia from phenylalanine by the phenylalanine ammonia-lyase str11, oxygenation by str8 and retro-Claisen reaction to form benzoic acid, which is activated to its CoA thiolester benzoyl CoA by the dedicated CoA ligase str10. Benzoyl CoA forms the starter unit for the highly reducing polyketide synthase stpks1 that produces the polyketide prestrobilutin A. The FAD-dependent oxygenase str9 then catalyzes the key oxidative rearrangement responsible for the creation of the beta-methoxyacrylate toxophore. Str9 performs epoxidation of the 2,3 olefin of prestrobilutin A, followed by Meinwald rearrangement to furnish the aldehyde intermediate. Rapid enolization of the aldehyde intermediate would give the beta-methoxyacrylate skeleton and methylations catalyzed by str2 and str3 complete the synthesis and lead to the production of strobilurin A. The short-chain dehydrogenase stl2 and the dehydrogenase str4 play a role in the shunt pathway leading to the production of bolineol. The cluster encodes no obvious halogenase gene that could be involved in production of strobilurin B, nor any obvious dimethylallyl-transferase that could be involved in the production of strobilurin G. It is possible that unknown proteins encoded in, or near, the cluster (such as str1 or stl1) may form new classes of halogenases or dimethylally-transferases, or that the responsible genes are located elsewhere on the genome. Similarly, proteins encoded by str5/str6 hydrolases appear to have no chemical role in the biosynthesis of strobilurin A. Finally, no obvious self-resistance gene is found within the cluster. This Strobilurus tenacellus protein is Beta-lactamase-like protein str6.